The chain runs to 519 residues: MLGVGMAAAVLLGAVALLLADAAARRAHWWYREAAEAVLVGAVALVVVDAAARRAHGWYREAALGAARRARLPPGEMGWPLVGGMWAFLRAFKSGKPDAFIASFVRRFGRTGVYRSFMFSSPTVLVTTAEGCKQVLMDDDAFVTGWPKATVALVGPRSFVAMPYDEHRRIRKLTAAPINGFDALTGYLPFIDRTVTSSLRAWADHGGSVEFLTELRRMTFKIIVQIFLGGADQATTRALERSYTELNYGMRAMAINLPGFAYRGALRARRRLVAVLQGVLDERRAARAKGVSGGGVDMMDRLIEAQDERGRHLDDDEIIDVLVMYLNAGHESSGHITMWATVFLQENPDMFARAKAEQEAIMRSIPSSQRGLTLRDFRKMEYLSQVIDETLRLVNISFVSFRQATRDVFVNGYLIPKGWKVQLWYRSVHMDPQVYPDPTKFDPSRWEGHSPRAGTFLAFGLGARLCPGNDLAKLEISVFLHHFLLGYKLARTNPRCRVRYLPHPRPVDNCLAKITRVGS.

The chain crosses the membrane as a helical span at residues 1 to 21 (MLGVGMAAAVLLGAVALLLAD). Cys466 is a heme binding site.

It belongs to the cytochrome P450 family. Requires heme as cofactor. Expressed in roots, developing leaves, the vegetative meristem, and suspension culture cells.

The protein localises to the membrane. The protein operates within plant hormone biosynthesis; gibberellin biosynthesis. The sequence is that of Cytochrome P450 88A1 (CYP88A1) from Zea mays (Maize).